Consider the following 448-residue polypeptide: tRNA wybutosine-synthesizing protein 2 homolog (448 aa).

Residues serine 218, lysine 225, glutamate 265, and 293 to 294 (DN) each bind S-adenosyl-L-methionine.

The protein belongs to the class I-like SAM-binding methyltransferase superfamily. TRM5/TYW2 family.

The enzyme catalyses 4-demethylwyosine(37) in tRNA(Phe) + S-adenosyl-L-methionine = 4-demethyl-7-[(3S)-3-amino-3-carboxypropyl]wyosine(37) in tRNA(Phe) + S-methyl-5'-thioadenosine + H(+). Its pathway is tRNA modification; wybutosine-tRNA(Phe) biosynthesis. In terms of biological role, S-adenosyl-L-methionine-dependent transferase that acts as a component of the wybutosine biosynthesis pathway. Wybutosine is a hyper modified guanosine with a tricyclic base found at the 3'-position adjacent to the anticodon of eukaryotic phenylalanine tRNA. Catalyzes the transfer of the alpha-amino-alpha-carboxypropyl (acp) group from S-adenosyl-L-methionine to the C-7 position of 4-demethylwyosine (imG-14) to produce wybutosine-86. The protein is tRNA wybutosine-synthesizing protein 2 homolog (TRMT12) of Macaca fascicularis (Crab-eating macaque).